Here is a 31-residue protein sequence, read N- to C-terminus: Cyclotide vibi-F (31 aa).

The segment at residues G1–N31 is a cross-link (cyclopeptide (Gly-Asn)). 3 disulfides stabilise this stretch: C5–C21, C9–C23, and C14–C28.

This is a cyclic peptide.

Its function is as follows. Probably participates in a plant defense mechanism. This is Cyclotide vibi-F from Viola biflora (Yellow wood violet).